The following is a 361-amino-acid chain: Glucose 1-dehydrogenase (361 aa).

Cysteine 41 is a binding site for Zn(2+). Threonine 43 contacts substrate. Residues histidine 68 and glutamate 69 each contribute to the Zn(2+) site. Substrate contacts are provided by glutamate 119, glutamate 156, and asparagine 160. Glutamate 156 lines the Zn(2+) pocket. NADP(+) contacts are provided by residues asparagine 216–histidine 218, phenylalanine 275–threonine 277, serine 304–aspartate 306, and lysine 349. Aspartate 306 contacts substrate.

The protein belongs to the zinc-containing alcohol dehydrogenase family. Glucose 1-dehydrogenase subfamily. As to quaternary structure, homotetramer. Zn(2+) serves as cofactor.

It catalyses the reaction D-glucose + NAD(+) = D-glucono-1,5-lactone + NADH + H(+). It carries out the reaction D-glucose + NADP(+) = D-glucono-1,5-lactone + NADPH + H(+). The catalysed reaction is D-galactose + NAD(+) = D-galactono-1,4-lactone + NADH + H(+). The enzyme catalyses D-galactose + NADP(+) = D-galactono-1,5-lactone + NADPH + H(+). Catalyzes the NAD(P)(+)-dependent oxidation of D-glucose to D-gluconate via gluconolactone. Is also significantly active with galactose as substrate, but not with mannose or glucose 6-phosphate. Can utilize both NAD(+) and NADP(+) as electron acceptor, with a marked preference for NADP(+). Physiologically, may be involved in the degradation of both glucose and galactose through a non-phosphorylative variant of the Entner-Doudoroff pathway. The chain is Glucose 1-dehydrogenase from Thermoplasma acidophilum (strain ATCC 25905 / DSM 1728 / JCM 9062 / NBRC 15155 / AMRC-C165).